The following is a 149-amino-acid chain: D-aminoacyl-tRNA deacylase (149 aa).

The short motif at 137–138 (GP) is the Gly-cisPro motif, important for rejection of L-amino acids element.

Belongs to the DTD family. As to quaternary structure, homodimer.

It localises to the cytoplasm. The enzyme catalyses glycyl-tRNA(Ala) + H2O = tRNA(Ala) + glycine + H(+). It catalyses the reaction a D-aminoacyl-tRNA + H2O = a tRNA + a D-alpha-amino acid + H(+). An aminoacyl-tRNA editing enzyme that deacylates mischarged D-aminoacyl-tRNAs. Also deacylates mischarged glycyl-tRNA(Ala), protecting cells against glycine mischarging by AlaRS. Acts via tRNA-based rather than protein-based catalysis; rejects L-amino acids rather than detecting D-amino acids in the active site. By recycling D-aminoacyl-tRNA to D-amino acids and free tRNA molecules, this enzyme counteracts the toxicity associated with the formation of D-aminoacyl-tRNA entities in vivo and helps enforce protein L-homochirality. This chain is D-aminoacyl-tRNA deacylase, found in Desulfitobacterium hafniense (strain DSM 10664 / DCB-2).